The sequence spans 308 residues: Transaldolase (308 aa).

K125 acts as the Schiff-base intermediate with substrate in catalysis.

The protein belongs to the transaldolase family. Type 1 subfamily. Homodimer.

It is found in the cytoplasm. It carries out the reaction D-sedoheptulose 7-phosphate + D-glyceraldehyde 3-phosphate = D-erythrose 4-phosphate + beta-D-fructose 6-phosphate. The protein operates within carbohydrate degradation; pentose phosphate pathway; D-glyceraldehyde 3-phosphate and beta-D-fructose 6-phosphate from D-ribose 5-phosphate and D-xylulose 5-phosphate (non-oxidative stage): step 2/3. Transaldolase is important for the balance of metabolites in the pentose-phosphate pathway. This Pseudomonas putida (strain ATCC 47054 / DSM 6125 / CFBP 8728 / NCIMB 11950 / KT2440) protein is Transaldolase.